The sequence spans 1483 residues: MSNTPYNSSVPSIASMTQSSVSRSPNMHTATTPGANTSSNSPPLHMSSDSSKIKRKRNRIPLSCTICRKRKVKCDKLRPHCQQCTKTGVAHLCHYMEQTWAEEAEKELLKDNELKKLRERVKSLEKTLSKVHSSPSSNSLKSYNTPESSNLFMGSDEHTTLVNANTGSASSASHMHQQQQQQQQQEQQQDFSRSANANANSSSLSISNKYDNDELDLTKDFDLLHIKSNGTIHLGATHWLSIMKGDPYLKLLWGHIFAMREKLNEWYYQKNSYSKLKSSKCPINHAQAPPSAAAAATRKCPVDHSAFSSGMVAPKEETPLPRKCPVDHTMFSSGMIPPREDTSSQKRCPVDHTMYSAGMMPPKDETPSPFSTKAMIDHNKHTMNPPQSKCPVDHRNYMKDYPSDMANSSSNPASRCPIDHSSMKNTAALPASTHNTIPHHQPQSGSHARSHPAQSRKHDSYMTESEVLATLCEMLPPKRVIALFIEKFFKHLYPAIPILDEQNFKNHVNQMLSLSSMNPTVNNFGMSMPSSSTLENQPITQINLPKLSDSCNLGILIIILRLTWLSIPSNSCEVDLGEESGSFLVPNESSNMSASALTSMAKEESLLLKHETPVEALELCQKYLIKFDELSSISNNNVNLTTVQFAIFYNFYMKSASNDLTTLTNTNNTGMANPGHDSESHQILLSNITQMAFSCGLHRDPDNFPQLNATIPATSQDVSNNGSKKANPSTNPTLNNNMSAATTNSSSRSGSADSRSGSNPVNKKENQVSIERFKHTWRKIWYYIVSMDVNQSLSLGSPRLLRNLRDFSDTKLPSASRIDYVRDIKELIIVKNFTLFFQIDLCIIAVLNHILNVSLARSVRKFELDSLINLLKNLTYGTENVNDVVSSLINKGLLPTSEGGSVDSNNDEIYGLPKLPDILNHGQHNQNLYADGRNTSSSDIDKKLDLPHESTTRALFFSKHMTIRMLLYLLNYILFTHYEPMGSEDPGTNILAKEYAQEALNFAMDGYRNCMIFFNNIRNTNSLFDYMNVILSYPCLDIGHRSLQFIVCLILRAKCGPLTGMRESSIITNGTSSGFNSSVEDEDVKVKQESSDELKKDDFMKDVNLDSGDSLAEILMSRMLLFQKLTKQLSKKYNYAIRMNKSTGFFVSLLDTPSKKSDSKSGGSSFMLGNWKHPKVSNMSGFLAGDKDQLQKCPVYQDALGFVSPTGANEGSAPMQGMSLQGSTARMGGTQLPPIRSYKPITYTSSNLRRMNETGEAEAKRRRFNDGYIDNNSNNDIPRGISPKPSNGLSSVQPLLSSFSMNQLNGGTIPTVPSLTNITSQMGALPSLDRITTNQINLPDPSRDEAFDNSIKQMTPMTSAFMNANTTIPSSTLNGNMNMNGAGTANTDTSANGSALSTLTSPQGSDLASNSATQYKPDLEDFLMQNSNFNGLMINPSSLVEVVGGYNDPNNLGRNDAVDFLPVDNVEIDGLVDFYRADFPIWE.

Over residues 1 to 50 (MSNTPYNSSVPSIASMTQSSVSRSPNMHTATTPGANTSSNSPPLHMSSDS) the composition is skewed to polar residues. A disordered region spans residues 1-56 (MSNTPYNSSVPSIASMTQSSVSRSPNMHTATTPGANTSSNSPPLHMSSDSSKIKRK). Zn(2+) is bound by residues Cys64, Cys67, Cys74, Cys81, Cys84, and Cys93. Residues 64-93 (CTICRKRKVKCDKLRPHCQQCTKTGVAHLC) constitute a DNA-binding region (zn(2)-C6 fungal-type). Positions 105–134 (EKELLKDNELKKLRERVKSLEKTLSKVHSS) form a coiled coil. The tract at residues 126–208 (KTLSKVHSSP…ANSSSLSISN (83 aa)) is disordered. Over residues 130-142 (KVHSSPSSNSLKS) the composition is skewed to low complexity. Composition is skewed to polar residues over residues 143–152 (YNTPESSNLF) and 160–176 (TLVNANTGSASSASHMH). Positions 177 to 208 (QQQQQQQQQEQQQDFSRSANANANSSSLSISN) are enriched in low complexity. Residues 244–444 (KGDPYLKLLW…NTIPHHQPQS (201 aa)) are heme-responsive; required for HMC formation. 6 HRM repeats span residues 280–285 (KCPINH), 299–304 (KCPVDH), 323–328 (KCPVDH), 347–352 (RCPVDH), 389–394 (KCPVDH), and 415–420 (RCPIDH). 2 stretches are compositionally biased toward polar residues: residues 432-447 (STHNTIPHHQPQSGSH) and 706-734 (QLNATIPATSQDVSNNGSKKANPSTNPTL). Disordered stretches follow at residues 432–458 (STHNTIPHHQPQSGSHARSHPAQSRKH) and 706–767 (QLNA…KENQ). Over residues 735–759 (NNNMSAATTNSSSRSGSADSRSGSN) the composition is skewed to low complexity. The HRM 7 repeat unit spans residues 1192 to 1197 (KCPVYQ). The segment at 1384–1411 (TANTDTSANGSALSTLTSPQGSDLASNS) is disordered. Polar residues predominate over residues 1388–1411 (DTSANGSALSTLTSPQGSDLASNS).

As to quaternary structure, binds DNA as a homodimer. Interacts with SRO9 and YDJ1. In the absence of heme, binds to at least four cellular proteins, including YDJ1 and SRO9, forming a high-molecular-weight complex (HMC) which results in repression of its activity and dictates its DNA-binding specificity.

The protein localises to the nucleus. Its function is as follows. Regulation of oxygen dependent gene expression. It modulates the expression of Iso-1 (CYP1) and Iso-2 (CYP3) cytochrome c. In response to heme, promotes transcription of genes encoding functions required for respiration, controlling oxidative damage and repression of anaerobic genes. Binds to the sequence 5'-CGGNNNTNNCGG-3'. Is non-functional in terms of iso-1 cytochrome c expression in strain S288c and its derivatives. The chain is Heme-responsive zinc finger transcription factor HAP1 (HAP1) from Saccharomyces cerevisiae (Baker's yeast).